A 40-amino-acid polypeptide reads, in one-letter code: MANTGGRIPLWLVATVAGLAAIGVLGIFFYGGYSGLGSSI.

The helical transmembrane segment at 8–28 (IPLWLVATVAGLAAIGVLGIF) threads the bilayer.

Belongs to the PsbJ family. As to quaternary structure, PSII is composed of 1 copy each of membrane proteins PsbA, PsbB, PsbC, PsbD, PsbE, PsbF, PsbH, PsbI, PsbJ, PsbK, PsbL, PsbM, PsbT, PsbX, PsbY, PsbZ, Psb30/Ycf12, at least 3 peripheral proteins of the oxygen-evolving complex and a large number of cofactors. It forms dimeric complexes.

The protein localises to the plastid. It is found in the cyanelle thylakoid membrane. One of the components of the core complex of photosystem II (PSII). PSII is a light-driven water:plastoquinone oxidoreductase that uses light energy to abstract electrons from H(2)O, generating O(2) and a proton gradient subsequently used for ATP formation. It consists of a core antenna complex that captures photons, and an electron transfer chain that converts photonic excitation into a charge separation. This chain is Photosystem II reaction center protein J, found in Cyanophora paradoxa.